A 607-amino-acid chain; its full sequence is Siderophore iron transporter mirC (607 aa).

12 helical membrane passes run 67 to 89, 129 to 148, 186 to 208, 223 to 245, 279 to 301, 311 to 328, 349 to 368, 388 to 410, 417 to 436, 446 to 468, 481 to 503, and 557 to 574; these read LVIA…QTIM, VFGR…LGYI, SLLN…VWIG, WGYG…SLLL, IFGL…LAAN, IVAM…LPFW, TALA…YFSV, GRVT…ILIK, VYVT…MLLY, VLGT…QLGV, TAMF…GAVW, and LLVL…LSLL. Positions 584–593 are enriched in basic and acidic residues; that stretch reads SESSDHDDAS. Residues 584–607 form a disordered region; it reads SESSDHDDASPRNGLGPGERAKRT.

It belongs to the major facilitator superfamily.

Its subcellular location is the membrane. The sequence is that of Siderophore iron transporter mirC (mirC) from Emericella nidulans (strain FGSC A4 / ATCC 38163 / CBS 112.46 / NRRL 194 / M139) (Aspergillus nidulans).